The sequence spans 355 residues: S-adenosylmethionine:tRNA ribosyltransferase-isomerase (355 aa).

Belongs to the QueA family. As to quaternary structure, monomer.

It localises to the cytoplasm. It carries out the reaction 7-aminomethyl-7-carbaguanosine(34) in tRNA + S-adenosyl-L-methionine = epoxyqueuosine(34) in tRNA + adenine + L-methionine + 2 H(+). It participates in tRNA modification; tRNA-queuosine biosynthesis. Functionally, transfers and isomerizes the ribose moiety from AdoMet to the 7-aminomethyl group of 7-deazaguanine (preQ1-tRNA) to give epoxyqueuosine (oQ-tRNA). This Burkholderia ambifaria (strain MC40-6) protein is S-adenosylmethionine:tRNA ribosyltransferase-isomerase.